A 174-amino-acid polypeptide reads, in one-letter code: Large ribosomal subunit protein uL15 (174 aa).

Disordered regions lie at residues 1–56 and 150–174; these read MKLH…GQMR and VERR…TPGA. A compositionally biased stretch (gly residues) spans 21–35; sequence RGIGSGKGKTGGKGM.

Belongs to the universal ribosomal protein uL15 family. Part of the 50S ribosomal subunit.

Its function is as follows. Binds to the 23S rRNA. This Roseiflexus castenholzii (strain DSM 13941 / HLO8) protein is Large ribosomal subunit protein uL15.